Consider the following 424-residue polypeptide: UDP-N-acetylglucosamine 1-carboxyvinyltransferase (424 aa).

Residue 22–23 (KN) participates in phosphoenolpyruvate binding. Arg98 provides a ligand contact to UDP-N-acetyl-alpha-D-glucosamine. Cys122 acts as the Proton donor in catalysis. Cys122 carries the 2-(S-cysteinyl)pyruvic acid O-phosphothioketal modification. UDP-N-acetyl-alpha-D-glucosamine is bound by residues 127–131 (RPVDQ), Asp312, and Ile334.

Belongs to the EPSP synthase family. MurA subfamily.

It localises to the cytoplasm. It carries out the reaction phosphoenolpyruvate + UDP-N-acetyl-alpha-D-glucosamine = UDP-N-acetyl-3-O-(1-carboxyvinyl)-alpha-D-glucosamine + phosphate. It functions in the pathway cell wall biogenesis; peptidoglycan biosynthesis. Functionally, cell wall formation. Adds enolpyruvyl to UDP-N-acetylglucosamine. The polypeptide is UDP-N-acetylglucosamine 1-carboxyvinyltransferase (Xanthomonas euvesicatoria pv. vesicatoria (strain 85-10) (Xanthomonas campestris pv. vesicatoria)).